The chain runs to 559 residues: MVIPWCSSMMRLLWFLFALLLARSVADAATANYTFTVESMRVSRLCNSTDIIAVNGLLPGPMIEVNEGDAVAVEVINGSPYNLTIHWHGILQLLTPWADGPSMVTQCPIQPNSSYTYRFNVTGQEGTLWWHAHSSFLRATVYGALIIRPRNGSAYPFPAPDQEVPIVLGEWWSRNVVDIESDAVSSGQLPRESDAFTVNGVTGELYQCANDTFTVDVQPNTTVLLRVINAGLNTHLFFKVAGHAFTVVAVDACYTANYTTDTLVLAPGHTVDALMVTNASAGSYYMAVQAYDSLSPTTMAVTDDTTATAIVHYNTTSTKKNATPVMPTMPQSSDSATANAFYFGLRGPPSPSAPAVPTKVDVNMTIELGLGQLPCDSTQSSCSGKSVAAAMNGVSFRLPSQMSLLEAQFNRTPGVYTADFPDAPQPSGTPMVEGTKVRRLKYNSTVEIVLQNPTAFPSENHPIHLHGFNFFVLAQGLGNFTPGNVSGYNLVDPVSRNTLAVPTGGWAVIRFVANNPGMWFFHCHLDAHVPMGLGMVFAVDNGTTPDSFLPPPPADLPKC.

The signal sequence occupies residues 1 to 28; it reads MVIPWCSSMMRLLWFLFALLLARSVADA. 3 N-linked (GlcNAc...) asparagine glycosylation sites follow: Asn-32, Asn-47, and Asn-82. Plastocyanin-like domains follow at residues 36 to 152 and 163 to 316; these read TVES…PRNG and EVPI…YNTT. 2 residues coordinate Cu cation: His-86 and His-88. Asn-112 and Asn-120 each carry an N-linked (GlcNAc...) asparagine glycan. Positions 131 and 133 each coordinate Cu cation. 8 N-linked (GlcNAc...) asparagine glycosylation sites follow: Asn-151, Asn-210, Asn-220, Asn-257, Asn-278, Asn-314, Asn-363, and Asn-443. Positions 396–543 constitute a Plastocyanin-like 3 domain; that stretch reads FRLPSQMSLL…GMVFAVDNGT (148 aa). Residues His-461, His-464, and His-466 each coordinate Cu cation. Asn-484 is a glycosylation site (N-linked (GlcNAc...) asparagine). Positions 522, 523, 524, and 528 each coordinate Cu cation. N-linked (GlcNAc...) asparagine glycosylation is present at Asn-541.

This sequence belongs to the multicopper oxidase family. Cu cation serves as cofactor.

Its subcellular location is the secreted. It is found in the extracellular space. It localises to the apoplast. It catalyses the reaction 4 hydroquinone + O2 = 4 benzosemiquinone + 2 H2O. Functionally, lignin degradation and detoxification of lignin-derived products. This Oryza sativa subsp. japonica (Rice) protein is Laccase-7 (LAC7).